The sequence spans 389 residues: S-adenosylmethionine synthase (389 aa).

His15 provides a ligand contact to ATP. Position 17 (Asp17) interacts with Mg(2+). Residue Glu43 coordinates K(+). L-methionine-binding residues include Glu56 and Gln99. The interval 99–109 (QSPDIAQGVNE) is flexible loop. Residues 166-168 (DAK), 234-235 (RF), Asp243, 249-250 (RK), Ala266, and Lys270 each bind ATP. Asp243 lines the L-methionine pocket. Lys274 lines the L-methionine pocket.

This sequence belongs to the AdoMet synthase family. Homotetramer; dimer of dimers. Mg(2+) is required as a cofactor. The cofactor is K(+).

Its subcellular location is the cytoplasm. The catalysed reaction is L-methionine + ATP + H2O = S-adenosyl-L-methionine + phosphate + diphosphate. Its pathway is amino-acid biosynthesis; S-adenosyl-L-methionine biosynthesis; S-adenosyl-L-methionine from L-methionine: step 1/1. In terms of biological role, catalyzes the formation of S-adenosylmethionine (AdoMet) from methionine and ATP. The overall synthetic reaction is composed of two sequential steps, AdoMet formation and the subsequent tripolyphosphate hydrolysis which occurs prior to release of AdoMet from the enzyme. The protein is S-adenosylmethionine synthase of Neisseria meningitidis serogroup C (strain 053442).